Here is a 425-residue protein sequence, read N- to C-terminus: Transmembrane protein 184A (425 aa).

7 helical membrane-spanning segments follow: residues 51–71 (LFLT…TALL), 96–116 (LLFI…LLGG), 133–153 (FVIY…SAIM), 189–209 (TLQF…LQAF), 226–246 (VTLV…LFYF), 261–281 (FLTI…LAIL), and 303–323 (LAAG…SLAL). Residues 375–425 (QYTQQSTHEAPGPGQGGHPSPSTHPGPASGSGGGKKSRNIEKRMLIPSEDL) form a disordered region. The segment covering 392–402 (HPSPSTHPGPA) has biased composition (low complexity).

The protein belongs to the TMEM184 family. As to expression, expressed in vascular cells (at protein level).

The protein localises to the cell membrane. It localises to the cytoplasm. It is found in the perinuclear region. Its subcellular location is the early endosome membrane. The protein resides in the endosome. The protein localises to the cytoplasmic vesicle. It localises to the secretory vesicle membrane. It is found in the cytoplasmic vesicle membrane. Acts as a heparin receptor in vascular cells. May be involved in vesicle transport in exocrine cells and Sertoli cells. The polypeptide is Transmembrane protein 184A (Tmem184a) (Rattus norvegicus (Rat)).